The chain runs to 217 residues: MSSFSESAILVRDALVARGLETPMKENGISREEKKERIEEHMREILSLLTLDLSDDSLEETPHRIAKMYVDEIFSGLDYANFPKITVIENKMNCDEMVRVNDITLTSTCEHHLVTIDGKATVAYIPREKIIGLSKINRIVRFFAQRPQVQERMTQQILVALQTLLGSDDVAITMEATHYCVKSRGVMDATSSTTTTALGGIFKRNPATRHEFLSGIR.

3 residues coordinate Zn(2+): Cys109, His112, and Cys180.

It belongs to the GTP cyclohydrolase I family. Homomer.

It carries out the reaction GTP + H2O = 7,8-dihydroneopterin 3'-triphosphate + formate + H(+). It functions in the pathway cofactor biosynthesis; 7,8-dihydroneopterin triphosphate biosynthesis; 7,8-dihydroneopterin triphosphate from GTP: step 1/1. This is GTP cyclohydrolase 1 from Aliivibrio salmonicida (strain LFI1238) (Vibrio salmonicida (strain LFI1238)).